The chain runs to 37 residues: Potassium channel toxin alpha-KTx 11.1 (37 aa).

Intrachain disulfides connect C8/C27, C13/C33, and C17/C35.

The protein belongs to the short scorpion toxin superfamily. Potassium channel inhibitor family. Alpha-KTx 11 subfamily. Expressed by the venom gland.

The protein resides in the secreted. Binds and inhibits voltage-sensitive potassium channels. Inhibits the vertebrate potassium channels Kv1.1/KCNA1, Kv1.2/KCNA2 and Kv1.3/KCNA3 with low affinity. Also weakly inhibits Kv7.1/KCNQ1 (10 uM of the toxin inhibits currents by 21.43%). The sequence is that of Potassium channel toxin alpha-KTx 11.1 from Parabuthus villosus (Black hairy thick-tailed scorpion).